Here is a 396-residue protein sequence, read N- to C-terminus: Unsaturated chondroitin disaccharide hydrolase (396 aa).

The Nucleophile role is filled by aspartate 113. Substrate-binding residues include aspartate 113, aspartate 173, glycine 231, threonine 233, arginine 245, tryptophan 249, serine 363, and serine 366. Residue aspartate 173 is the Proton donor of the active site.

This sequence belongs to the glycosyl hydrolase 88 family. In terms of assembly, monomer.

It catalyses the reaction beta-D-4-deoxy-Delta(4)-GlcpA-(1-&gt;3)-beta-D-GalpNAc6S + H2O = N-acetyl-beta-D-galactosamine 6-sulfate + 5-dehydro-4-deoxy-D-glucuronate. Catalyzes the hydrolysis of unsaturated hyaluronate and chondroitin disaccharides. Also degrades unsaturated heparin disaccharides. Releases 4-deoxy-4,5-didehydro D-glucuronic acid or 4-deoxy-4,5-didehydro L-iduronic acid from chondroitin disaccharides, hyaluronan disaccharides and heparin disaccharides and cleaves both glycosidic (1-&gt;3) and (1-&gt;4) bonds. Prefers sulfated glycosaminoglycans compared to unsulfated glycosaminoglycans. Probably required for mammalian cells invasion through the degradation of extracellular sulfated glycosaminoglycans such as chondroitin and hyaluronan. In Streptococcus pneumoniae (strain ATCC BAA-255 / R6), this protein is Unsaturated chondroitin disaccharide hydrolase (ugl).